The sequence spans 194 residues: Adenylate kinase (194 aa).

10 to 15 (GAGKGT) lines the ATP pocket. An NMP region spans residues 30-59 (STGDMLRAAVAQQSEIGKRAKAVMDAGQLV). AMP is bound by residues Thr-31, Arg-36, 57–59 (QLV), 85–88 (GYPR), and Gln-92. An LID region spans residues 126–142 (SRVAETIAKGGQVRSDD). Residue Arg-127 coordinates ATP. AMP contacts are provided by Arg-139 and Arg-150. Ala-178 lines the ATP pocket.

This sequence belongs to the adenylate kinase family. As to quaternary structure, monomer.

It is found in the cytoplasm. The catalysed reaction is AMP + ATP = 2 ADP. It functions in the pathway purine metabolism; AMP biosynthesis via salvage pathway; AMP from ADP: step 1/1. Functionally, catalyzes the reversible transfer of the terminal phosphate group between ATP and AMP. Plays an important role in cellular energy homeostasis and in adenine nucleotide metabolism. The protein is Adenylate kinase of Brucella canis (strain ATCC 23365 / NCTC 10854 / RM-666).